The following is a 460-amino-acid chain: V-type ATP synthase beta chain 2 (460 aa).

It belongs to the ATPase alpha/beta chains family.

Its function is as follows. Produces ATP from ADP in the presence of a proton gradient across the membrane. The V-type beta chain is a regulatory subunit. This Clostridium tetani (strain Massachusetts / E88) protein is V-type ATP synthase beta chain 2.